A 258-amino-acid polypeptide reads, in one-letter code: UPF0246 protein YE0603 (258 aa).

The protein belongs to the UPF0246 family.

In Yersinia enterocolitica serotype O:8 / biotype 1B (strain NCTC 13174 / 8081), this protein is UPF0246 protein YE0603.